Consider the following 193-residue polypeptide: Ganglioside GM2 activator (193 aa).

A signal peptide spans 1–20 (MHRLPLLLLLGLLLAGSVAP). Intrachain disulfides connect Cys39–Cys183, Cys99–Cys106, Cys112–Cys138, and Cys125–Cys136. A glycan (N-linked (GlcNAc...) asparagine) is linked at Asn151.

In terms of tissue distribution, widely expressed. Most abundant in kidney and testis.

Its subcellular location is the lysosome. The enzyme catalyses cholesterol(in) = cholesterol(out). Binds gangliosides and stimulates ganglioside GM2 degradation. It stimulates only the breakdown of ganglioside GM2 and glycolipid GA2 by beta-hexosaminidase A. It extracts single GM2 molecules from membranes and presents them in soluble form to beta-hexosaminidase A for cleavage of N-acetyl-D-galactosamine and conversion to GM3. The large binding pocket can accommodate several single chain phospholipids and fatty acids, GM2A also exhibits some calcium-independent phospholipase activity. Has cholesterol transfer activity. The protein is Ganglioside GM2 activator of Mus musculus (Mouse).